A 479-amino-acid polypeptide reads, in one-letter code: Glycogen synthase (479 aa).

An ADP-alpha-D-glucose-binding site is contributed by Lys15.

It belongs to the glycosyltransferase 1 family. Bacterial/plant glycogen synthase subfamily.

It carries out the reaction [(1-&gt;4)-alpha-D-glucosyl](n) + ADP-alpha-D-glucose = [(1-&gt;4)-alpha-D-glucosyl](n+1) + ADP + H(+). It participates in glycan biosynthesis; glycogen biosynthesis. Functionally, synthesizes alpha-1,4-glucan chains using ADP-glucose. The protein is Glycogen synthase of Nostoc punctiforme (strain ATCC 29133 / PCC 73102).